The chain runs to 220 residues: Miraculin (220 aa).

Residues 1 to 29 form the signal peptide; sequence MKELTMLSLSFFFVSALLAAAANPLLSAA. Asn71 carries N-linked (GlcNAc...) asparagine glycosylation. 3 disulfide bridges follow: Cys76–Cys121, Cys177–Cys188, and Cys181–Cys184. Asn215 carries an N-linked (GlcNAc...) asparagine glycan.

It belongs to the protease inhibitor I3 (leguminous Kunitz-type inhibitor) family. Homotetramer; dimer of homodimer. Glycosylated; contains as much as 13,9% of sugars (glucosamine, mannose, galactose, xylose, and fucose). Expressed in fruit pulp after pollination. Not expressed in seeds, stems or leaves.

In terms of biological role, miraculin has the property of modifying a sour taste into a sweet taste. This alteration of taste perception persists for many minutes. The chain is Miraculin from Synsepalum dulcificum (Miracle fruit).